The primary structure comprises 528 residues: Peptide chain release factor 3 (528 aa).

The region spanning 11 to 279 is the tr-type G domain; it reads EKRRTFAIIS…GLVEWAPKPL (269 aa). GTP is bound by residues 20 to 27, 88 to 92, and 142 to 145; these read SHPDAGKT, DTPGH, and NKCD.

It belongs to the TRAFAC class translation factor GTPase superfamily. Classic translation factor GTPase family. PrfC subfamily.

It localises to the cytoplasm. Its function is as follows. Increases the formation of ribosomal termination complexes and stimulates activities of RF-1 and RF-2. It binds guanine nucleotides and has strong preference for UGA stop codons. It may interact directly with the ribosome. The stimulation of RF-1 and RF-2 is significantly reduced by GTP and GDP, but not by GMP. The protein is Peptide chain release factor 3 of Psychromonas ingrahamii (strain DSM 17664 / CCUG 51855 / 37).